Consider the following 770-residue polypeptide: Molybdenum cofactor sulfurase (770 aa).

N6-(pyridoxal phosphate)lysine is present on Lys-243. Residue Cys-405 is part of the active site. An MOSC domain is found at 611–769 (GDEVANWLCQ…LACGDPITVL (159 aa)). Position 726 is a phosphoserine (Ser-726).

Belongs to the class-V pyridoxal-phosphate-dependent aminotransferase family. MOCOS subfamily. Requires pyridoxal 5'-phosphate as cofactor.

The catalysed reaction is Mo-molybdopterin + L-cysteine + AH2 = thio-Mo-molybdopterin + L-alanine + A + H2O. Its pathway is cofactor biosynthesis; molybdopterin biosynthesis. Sulfurates the molybdenum cofactor. Sulfation of molybdenum is essential for xanthine dehydrogenase (XDH) and aldehyde oxidase (ADO) enzymes in which molybdenum cofactor is liganded by 1 oxygen and 1 sulfur atom in active form. In Drosophila grimshawi (Hawaiian fruit fly), this protein is Molybdenum cofactor sulfurase.